The chain runs to 1288 residues: Vacuolating cytotoxin autotransporter (1288 aa).

The first 33 residues, 1 to 33 (MEIQQTHRKINRPLVSLVLAGALISAIPQESHA), serve as a signal peptide directing secretion. The tract at residues 326-377 (PPEGGYKDKPNSTTSQSGTKNDKKEISQNNNSNTEVINPPNNTQKTETEPTQ) is disordered. Residues 352–376 (SQNNNSNTEVINPPNNTQKTETEPT) show a composition bias toward polar residues. The 274-residue stretch at 1015–1288 (KYEKPTNVWA…ASNLGMRYSF (274 aa)) folds into the Autotransporter domain.

It is found in the periplasm. It localises to the secreted. The protein localises to the cell surface. Its subcellular location is the cell outer membrane. Induces vacuolation of eukaryotic cells. Causes ulceration and gastric lesions. This is Vacuolating cytotoxin autotransporter (vacA) from Helicobacter pylori (strain J99 / ATCC 700824) (Campylobacter pylori J99).